We begin with the raw amino-acid sequence, 138 residues long: Large ribosomal subunit protein uL16 (138 aa).

Over residues 1-15 (MLSPRKVKYRKKQRG) the composition is skewed to basic residues. The disordered stretch occupies residues 1-21 (MLSPRKVKYRKKQRGRLSGEA).

This sequence belongs to the universal ribosomal protein uL16 family. In terms of assembly, part of the 50S ribosomal subunit.

Its function is as follows. Binds 23S rRNA and is also seen to make contacts with the A and possibly P site tRNAs. The chain is Large ribosomal subunit protein uL16 from Borrelia recurrentis (strain A1).